Here is a 144-residue protein sequence, read N- to C-terminus: Prefoldin subunit alpha (144 aa).

The protein belongs to the prefoldin alpha subunit family. As to quaternary structure, heterohexamer of two alpha and four beta subunits.

It localises to the cytoplasm. Its function is as follows. Molecular chaperone capable of stabilizing a range of proteins. Seems to fulfill an ATP-independent, HSP70-like function in archaeal de novo protein folding. The chain is Prefoldin subunit alpha from Methanococcus maripaludis (strain C5 / ATCC BAA-1333).